We begin with the raw amino-acid sequence, 352 residues long: 7,8-didemethyl-8-hydroxy-5-deazariboflavin synthase (352 aa).

Residues 35–275 (ITFSKNAFIP…EDISIQVPPN (241 aa)) form the Radical SAM core domain. Residues Cys-49, Cys-53, and Cys-56 each coordinate [4Fe-4S] cluster.

The protein belongs to the radical SAM superfamily. CofG family. In terms of assembly, consists of two subunits, CofG and CofH. Requires [4Fe-4S] cluster as cofactor.

The catalysed reaction is 5-amino-5-(4-hydroxybenzyl)-6-(D-ribitylimino)-5,6-dihydrouracil + S-adenosyl-L-methionine = 7,8-didemethyl-8-hydroxy-5-deazariboflavin + 5'-deoxyadenosine + L-methionine + NH4(+) + H(+). The protein operates within cofactor biosynthesis; coenzyme F0 biosynthesis. In terms of biological role, catalyzes the radical-mediated synthesis of 7,8-didemethyl-8-hydroxy-5-deazariboflavin from 5-amino-5-(4-hydroxybenzyl)-6-(D-ribitylimino)-5,6-dihydrouracil. In Methanococcus maripaludis (strain C6 / ATCC BAA-1332), this protein is 7,8-didemethyl-8-hydroxy-5-deazariboflavin synthase.